The sequence spans 234 residues: Triosephosphate isomerase (234 aa).

8–10 provides a ligand contact to substrate; the sequence is NFK. Catalysis depends on H90, which acts as the Electrophile. Residue E159 is the Proton acceptor of the active site. Residues G165 and S197 each coordinate substrate.

This sequence belongs to the triosephosphate isomerase family. As to quaternary structure, homodimer.

It is found in the cytoplasm. It carries out the reaction D-glyceraldehyde 3-phosphate = dihydroxyacetone phosphate. The protein operates within carbohydrate biosynthesis; gluconeogenesis. Its pathway is carbohydrate degradation; glycolysis; D-glyceraldehyde 3-phosphate from glycerone phosphate: step 1/1. In terms of biological role, involved in the gluconeogenesis. Catalyzes stereospecifically the conversion of dihydroxyacetone phosphate (DHAP) to D-glyceraldehyde-3-phosphate (G3P). The polypeptide is Triosephosphate isomerase (Helicobacter pylori (strain Shi470)).